The chain runs to 473 residues: Ribulose bisphosphate carboxylase large chain 1 (473 aa).

Residues N116 and T166 each contribute to the substrate site. K168 serves as the catalytic Proton acceptor. Position 170 (K170) interacts with substrate. Mg(2+) contacts are provided by K194, D196, and E197. K194 is modified (N6-carboxylysine). H287 functions as the Proton acceptor in the catalytic mechanism. R288, H320, and S372 together coordinate substrate.

Belongs to the RuBisCO large chain family. Type I subfamily. As to quaternary structure, heterohexadecamer of 8 large chains and 8 small chains. The cofactor is Mg(2+).

The enzyme catalyses 2 (2R)-3-phosphoglycerate + 2 H(+) = D-ribulose 1,5-bisphosphate + CO2 + H2O. It catalyses the reaction D-ribulose 1,5-bisphosphate + O2 = 2-phosphoglycolate + (2R)-3-phosphoglycerate + 2 H(+). RuBisCO catalyzes two reactions: the carboxylation of D-ribulose 1,5-bisphosphate, the primary event in carbon dioxide fixation, as well as the oxidative fragmentation of the pentose substrate. Both reactions occur simultaneously and in competition at the same active site. The protein is Ribulose bisphosphate carboxylase large chain 1 of Acidithiobacillus ferrooxidans (strain ATCC 23270 / DSM 14882 / CIP 104768 / NCIMB 8455) (Ferrobacillus ferrooxidans (strain ATCC 23270)).